The following is a 136-amino-acid chain: Protein NrdI (136 aa).

This sequence belongs to the NrdI family.

Probably involved in ribonucleotide reductase function. This chain is Protein NrdI, found in Shigella boydii serotype 4 (strain Sb227).